Reading from the N-terminus, the 394-residue chain is Potassium channel subfamily K member 18 (394 aa).

The Cytoplasmic portion of the chain corresponds to 1–31 (MEAEEPPEARRCCPEALGKARGCCPEALGKL). A helical membrane pass occupies residues 32–52 (LPGLCFLCCLVTYALVGAALF). Asparagine 83 carries an N-linked (GlcNAc...) asparagine glycan. Positions 114-140 (FLSALFFCCTVFSTVGYGHMYPVTRLG) form an intramembrane region, pore-forming. The K(+) site is built by threonine 127, valine 128, glycine 129, and tyrosine 130. Residues 127 to 132 (TVGYGH) form a selectivity filter 1 region. The helical transmembrane segment at 142 to 162 (FLCMLYALFGIPLMFLVLTDI) threads the bilayer. Over 163–292 (GDILATILSR…EVGQQVERLD (130 aa)) the chain is Cytoplasmic. The interval 210 to 215 (PQIVID) is interaction with calcineurin. Residues 261-266 (RSNSCP) form an interaction with YWHAH region. A phosphoserine mark is found at serine 264 and serine 276. The helical transmembrane segment at 293–313 (IPLPVIALVVFAYISCAAAIL) threads the bilayer. Residues 326–340 (FYFCFVTLTTIGFGD) constitute an intramembrane region (pore-forming). Residues 335-340 (TIGFGD) are selectivity filter 2. Residues 347–367 (HFFLFFSIYIIVGMEILFIAF) form a helical membrane-spanning segment. Residues 368–394 (KLMQNRLLHTYKTLMLFVCQREVSLPW) lie on the Cytoplasmic side of the membrane.

It belongs to the two pore domain potassium channel (TC 1.A.1.8) family. As to quaternary structure, homodimer. Heterodimer with KCNK2. Heterodimer with KCNK10. Interacts with calcineurin. Interacts with YWHAH, in a phosphorylation-dependent manner. Post-translationally, phosphorylation of Ser-264 is required for the binding of 14-3-3eta/YWHAH. Calcineurin-mediated dephosphorylation of Ser-276 enhances channel activity. N-glycosylated. Detected in brain cortex, cerebellum, dorsal root ganglion, spinal cord and testis. High expression in trigeminal ganglion (at protein level), also expressed in autonomic nervous system ganglia such as the stellate ganglion and paravertebral sympathetic ganglia. Expressed in all adult spinal cord and brain regions, with slightly higher expression in thalamus, hypothalamus, hippocampus and posterior corte (at protein level). In non-neuronal tissues, substantial expression found in lung and heart and weal expression in liver, testis, kidney, small intestine and spleen. Expressed in regulatory T cells (at protein level).

The protein resides in the cell membrane. The enzyme catalyses K(+)(in) = K(+)(out). Its activity is regulated as follows. Activated upon cell stimulation via Ca(2+)-mobilizing receptors, such as CHRM1/M1 muscarinic receptor and AGTR1/AT1a angiotensin receptor. Activated by volatile anesthetics, such as isoflurane and inhibited by local anesthetics such as bupivacaine and lidocaine. Inhibited by extracellular acidic pH. Inhibited by Zn(2+) ions. Inhibited by hydroxy-alpha-sanshool, an ingredient of Schezuan pepper. Inhibited by Ba(2+) ions. Functionally, k(+) channel that conducts outward and inward rectifying currents at depolarized and hyperpolarized membrane potentials, respectively. The outward rectifying currents are voltage-dependent, coupled to K(+) electrochemical gradient across the membrane, whereas the inward currents can be induced in response to activation of Ca(2+)-mobilizing receptors. Homo- and heterodimerizes to form functional channels with distinct regulatory and gating properties. In trigeminal ganglia sensory neurons, the heterodimers of KCNK18/TRESK and KCNK2/TREK-1 or KCNK10/TREK-2 inhibit neuronal firing and neurogenic inflammation by stabilizing the resting membrane potential at K(+) equilibrium potential as well as by regulating the threshold of action potentials and the spike frequency. In thymocytes, conducts K(+) currents upon T cell receptor (TCR) signaling leading to sustained Ca(2+) influx and NF-kappa-B activation, FOXP3 transcription and positive selection of regulatory T cell (Treg) progenitor subsets. Appears to mediate the analgesics effects of hydroxy-alpha-sanshool, a metabolite naturally present in Schezuan pepper and other Xanthoxylum plants. The polypeptide is Potassium channel subfamily K member 18 (Mus musculus (Mouse)).